A 1025-amino-acid polypeptide reads, in one-letter code: Multidrug resistance protein MdtC (1025 aa).

At 1–6 (MKFFAL) the chain is on the cytoplasmic side. Residues 7–29 (FIYRPVATILLSVAITLCGILGF) form a helical membrane-spanning segment. The Periplasmic portion of the chain corresponds to 30–335 (RMLPVAPLPQ…TIRASLEEVE (306 aa)). A helical membrane pass occupies residues 336–353 (QTLIISVALVILVVFLFL). Residues 354–359 (RSGRAT) lie on the Cytoplasmic side of the membrane. The chain crosses the membrane as a helical span at residues 360–379 (IIPAVAVPVSLIGTFAAMYL). Residues 380-388 (CGFSLNNLS) are Periplasmic-facing. Residues 389–411 (LMALTIATGFVVDDAIVVLENIA) traverse the membrane as a helical segment. Over 412 to 430 (RHLEAGMKPLQAALQGTRE) the chain is Cytoplasmic. A helical transmembrane segment spans residues 431–453 (VGFTVLSMSLSLVAVFLPLLLMG). Residues 454–467 (GLPGRLLREFAVTL) are Periplasmic-facing. The helical transmembrane segment at 468–490 (SVAIGISLLVSLTLTPMMCGWML) threads the bilayer. Residues 491–852 (KASKPREQKR…QVFQETMNSQ (362 aa)) lie on the Cytoplasmic side of the membrane. Residues 853 to 875 (VILIIAAIATVYIVLGILYESYV) form a helical membrane-spanning segment. Topologically, residues 876-894 (HPLTILSTLPSAGVGALLA) are periplasmic. A helical transmembrane segment spans residues 895-917 (LELFNAPFSLIALIGIMLLIGIV). The Cytoplasmic segment spans residues 918-947 (KKNAIMMVDFALEAQRHGNLTPQEAIFQAC). A helical transmembrane segment spans residues 948–970 (LLRFRPIMMTTLAALFGALPLVL). Residues 971–984 (SGGDGSELRQPLGI) lie on the Periplasmic side of the membrane. Residues 985–1007 (TIVGGLVMSQLLTLYTTPVVYLF) form a helical membrane-spanning segment. Over 1008 to 1025 (FDRLRLRFSRKPKQAVTE) the chain is Cytoplasmic.

It belongs to the resistance-nodulation-cell division (RND) (TC 2.A.6) family. MdtC subfamily. As to quaternary structure, part of a tripartite efflux system composed of MdtA, MdtB and MdtC. MdtC forms a heteromultimer with MdtB.

The protein resides in the cell inner membrane. The MdtABC tripartite complex confers resistance against novobiocin and deoxycholate. The sequence is that of Multidrug resistance protein MdtC from Escherichia coli O6:H1 (strain CFT073 / ATCC 700928 / UPEC).